A 183-amino-acid chain; its full sequence is Inner membrane protein p54 (183 aa).

The helical transmembrane segment at 32–52 (YTILIAIVVLVIIIIVLIYLF) threads the bilayer. The segment at 81–157 (EVTPQPGTSK…PYTTVTTQNT (77 aa)) is disordered. Polar residues predominate over residues 111–122 (RPATNKPVTDNP). Residues 130–143 (ATGGPAAAPAAASA) are compositionally biased toward low complexity. Residues 149 to 161 (YTTVTTQNTASQT) form an interaction with host DYNLL1 region.

The protein belongs to the asfivirus envelope protein p54 family. Interacts with the host light chain cytoplasmic dynein DYNLL1; this interaction is critical for intracellular microtubule-dependent virus transport toward viral factories.

It localises to the virion membrane. The protein localises to the host cytoplasm. The protein resides in the host cytoskeleton. It is found in the host endoplasmic reticulum membrane. In terms of biological role, inner envelope protein involved, through its interaction with host dynein, in the intracellular microtubule-dependent transport of viral capsid toward viral factories. Seems to induce caspase-3 activation and apoptosis. Plays a role in virion morphogenesis by recruiting and transforming the host ER membranes into the precursors of the viral envelope. Involved in virus attachment to the host cell. The protein is Inner membrane protein p54 of Ornithodoros (relapsing fever ticks).